Here is a 404-residue protein sequence, read N- to C-terminus: Glycosylated lysosomal membrane protein B (404 aa).

The signal sequence occupies residues 1-24; the sequence is MSCTRGWRLILLGLLCVGLLGTRG. Residues 25–364 lie on the Lumenal side of the membrane; sequence QDESRKVSVQ…YGDPPRDSFS (340 aa). N-linked (GlcNAc...) asparagine glycans are attached at residues asparagine 85, asparagine 124, asparagine 128, asparagine 142, asparagine 152, asparagine 156, asparagine 163, asparagine 168, asparagine 178, asparagine 189, asparagine 205, asparagine 221, asparagine 266, asparagine 303, and asparagine 330. The chain crosses the membrane as a helical span at residues 365–385; that stretch reads ILVICIMAVALGTPLLLLIIG. Topologically, residues 386–404 are cytoplasmic; it reads TVLVTAVRHKVYPNYQPIN. The Lysosomal targeting motif motif lies at 400–404; sequence YQPIN.

This sequence belongs to the GLMP family. Interacts (via lumenal domain) with lysosomal protein MFSD1; the interaction starts while both proteins are still in the endoplasmic reticulum and is required for stabilization of MFSD1 in lysosomes but has no direct effect on its targeting to lysosomes or transporter activity.

Its subcellular location is the lysosome membrane. In terms of biological role, required to protect lysosomal transporter MFSD1 from lysosomal proteolysis and for MFSD1 lysosomal localization. This Xenopus laevis (African clawed frog) protein is Glycosylated lysosomal membrane protein B (glmp-b).